The chain runs to 657 residues: Hemocyanin B chain (657 aa).

A disulfide bond links Cys-93 and Cys-98. An N-linked (GlcNAc...) asparagine glycan is attached at Asn-167. Cu cation contacts are provided by His-194, His-198, His-224, His-344, His-348, and His-384. Cystine bridges form between Cys-483-Cys-502 and Cys-562-Cys-609.

This sequence belongs to the tyrosinase family. Hemocyanin subfamily. In terms of assembly, hexamer of a number of different chains, of which A, B, and C have been identified. As to expression, hemolymph.

The protein localises to the secreted. The protein resides in the extracellular space. Hemocyanins are copper-containing oxygen carriers occurring freely dissolved in the hemolymph of many mollusks and arthropods. This chain is Hemocyanin B chain, found in Panulirus interruptus (California spiny lobster).